The following is a 278-amino-acid chain: Envelope glycoprotein L (278 aa).

Positions 1 to 30 are cleaved as a signal peptide; sequence MCRRPDCGFSFSPGPVVLLWCCLLLPIVSS. A gL betaherpesvirus-type domain is found at 43–256; that stretch reads VPAECPELTR…DKYYAGLPPE (214 aa). C154 and C159 form a disulfide bridge.

It belongs to the herpesviridae glycoprotein L (gL) family. Betaherpesvirinae gL subfamily. As to quaternary structure, interacts with glycoprotein H (gH); this interaction is necessary for the correct processing and cell surface expression of gH. Forms the envelope pentamer complex (PC) composed of gH, gL, UL128, UL130, and UL131A. The pentamer interacts with host NRP2. Forms the envelope trimer complex composed of gH, gL, and gO. The trimer interacts with host PDGFRA. The trimer also interacts with host EPHA2.

The protein resides in the virion membrane. It is found in the host cell membrane. Its subcellular location is the host Golgi apparatus. It localises to the host trans-Golgi network. Functionally, the heterodimer glycoprotein H-glycoprotein L is required for the fusion of viral and plasma membranes leading to virus entry into the host cell. Acts as a functional inhibitor of gH and maintains gH in an inhibited form. Upon binding to host integrins, gL dissociates from gH leading to activation of the viral fusion glycoproteins gB and gH. In human cytomegalovirus, forms two distincts complexes to mediate viral entry, a trimer and a pentamer at the surface of the virion envelope. The gH-gL-gO trimer is required for infection in fibroblasts by interacting with host PDGFRA, and in glioblastoma cells by interacting with host EPHA2. The gH-gL-UL128-UL130-UL131A pentamer is essential for viral entry in epithelial, endothelial and myeloid cells via interaction with host NRP2. In Human cytomegalovirus (strain 5040) (HHV-5), this protein is Envelope glycoprotein L.